We begin with the raw amino-acid sequence, 328 residues long: G2/mitotic-specific cyclin-2 (328 aa).

This sequence belongs to the cyclin family. Cyclin AB subfamily. Interacts with the CDC2 protein kinase to form a serine/threonine kinase holoenzyme complex also known as maturation promoting factor (MPF). The cyclin subunit imparts substrate specificity to the complex. In terms of tissue distribution, only expressed in organs with dividing cells.

Essential for the control of the cell cycle at the G2/M (mitosis) transition. In Medicago sativa (Alfalfa), this protein is G2/mitotic-specific cyclin-2.